An 81-amino-acid chain; its full sequence is Cytochrome b559 subunit alpha (81 aa).

Residues 21 to 35 (VIHSITIPMLFIAGW) traverse the membrane as a helical segment. Position 23 (His23) interacts with heme.

Belongs to the PsbE/PsbF family. Heterodimer of an alpha subunit and a beta subunit. PSII is composed of 1 copy each of membrane proteins PsbA, PsbB, PsbC, PsbD, PsbE, PsbF, PsbH, PsbI, PsbJ, PsbK, PsbL, PsbM, PsbT, PsbX, PsbY, PsbZ, Psb30/Ycf12, peripheral proteins PsbO, CyanoQ (PsbQ), PsbU, PsbV and a large number of cofactors. It forms dimeric complexes. Heme b is required as a cofactor.

It localises to the cellular thylakoid membrane. Functionally, this b-type cytochrome is tightly associated with the reaction center of photosystem II (PSII). PSII is a light-driven water:plastoquinone oxidoreductase that uses light energy to abstract electrons from H(2)O, generating O(2) and a proton gradient subsequently used for ATP formation. It consists of a core antenna complex that captures photons, and an electron transfer chain that converts photonic excitation into a charge separation. This chain is Cytochrome b559 subunit alpha, found in Picosynechococcus sp. (strain ATCC 27264 / PCC 7002 / PR-6) (Agmenellum quadruplicatum).